The primary structure comprises 156 residues: Ribosome maturation factor RimP (156 aa).

It belongs to the RimP family.

The protein localises to the cytoplasm. Its function is as follows. Required for maturation of 30S ribosomal subunits. This is Ribosome maturation factor RimP from Microcystis aeruginosa (strain NIES-843 / IAM M-2473).